The following is a 313-amino-acid chain: Formimidoylglutamase (313 aa).

The Mn(2+) site is built by His-130, Asp-155, His-157, Asp-159, Asp-241, and Asp-243.

It belongs to the arginase family. Mn(2+) serves as cofactor.

The catalysed reaction is N-formimidoyl-L-glutamate + H2O = formamide + L-glutamate. It functions in the pathway amino-acid degradation; L-histidine degradation into L-glutamate; L-glutamate from N-formimidoyl-L-glutamate (hydrolase route): step 1/1. Catalyzes the conversion of N-formimidoyl-L-glutamate to L-glutamate and formamide. In Salmonella choleraesuis (strain SC-B67), this protein is Formimidoylglutamase.